We begin with the raw amino-acid sequence, 324 residues long: Quinolinate synthase (324 aa).

Residues histidine 44 and serine 62 each contribute to the iminosuccinate site. Cysteine 107 serves as a coordination point for [4Fe-4S] cluster. Residues 133–135 (YVN) and serine 150 each bind iminosuccinate. Residue cysteine 192 coordinates [4Fe-4S] cluster. Iminosuccinate-binding positions include 218–220 (HPE) and threonine 235. [4Fe-4S] cluster is bound at residue cysteine 278.

The protein belongs to the quinolinate synthase family. Type 2 subfamily. Requires [4Fe-4S] cluster as cofactor.

It is found in the cytoplasm. The enzyme catalyses iminosuccinate + dihydroxyacetone phosphate = quinolinate + phosphate + 2 H2O + H(+). It functions in the pathway cofactor biosynthesis; NAD(+) biosynthesis; quinolinate from iminoaspartate: step 1/1. Its function is as follows. Catalyzes the condensation of iminoaspartate with dihydroxyacetone phosphate to form quinolinate. This is Quinolinate synthase from Leptospira interrogans serogroup Icterohaemorrhagiae serovar copenhageni (strain Fiocruz L1-130).